Consider the following 178-residue polypeptide: Interleukin-10 (178 aa).

Residues 1–18 (MHSSALLCYLVFLAGVGA) form the signal peptide. 2 cysteine pairs are disulfide-bonded: Cys-30–Cys-126 and Cys-80–Cys-132. Asn-67 is a glycosylation site (N-linked (GlcNAc...) asparagine). N-linked (GlcNAc...) asparagine glycosylation occurs at Asn-134.

It belongs to the IL-10 family. Homodimer. Interacts with IL10RA and IL10RB.

The protein localises to the secreted. Major immune regulatory cytokine that acts on many cells of the immune system where it has profound anti-inflammatory functions, limiting excessive tissue disruption caused by inflammation. Mechanistically, IL10 binds to its heterotetrameric receptor comprising IL10RA and IL10RB leading to JAK1 and STAT2-mediated phosphorylation of STAT3. In turn, STAT3 translocates to the nucleus where it drives expression of anti-inflammatory mediators. Targets antigen-presenting cells (APCs) such as macrophages and monocytes and inhibits their release of pro-inflammatory cytokines including granulocyte-macrophage colony-stimulating factor /GM-CSF, granulocyte colony-stimulating factor/G-CSF, IL-1 alpha, IL-1 beta, IL-6, IL-8 and TNF-alpha. Also interferes with antigen presentation by reducing the expression of MHC-class II and co-stimulatory molecules, thereby inhibiting their ability to induce T cell activation. In addition, controls the inflammatory response of macrophages by reprogramming essential metabolic pathways including mTOR signaling. In Equus caballus (Horse), this protein is Interleukin-10 (IL10).